Here is a 397-residue protein sequence, read N- to C-terminus: Histidinol-phosphate aminotransferase (397 aa).

K247 carries the post-translational modification N6-(pyridoxal phosphate)lysine.

Belongs to the class-II pyridoxal-phosphate-dependent aminotransferase family. Histidinol-phosphate aminotransferase subfamily. As to quaternary structure, homodimer. Pyridoxal 5'-phosphate serves as cofactor.

The enzyme catalyses L-histidinol phosphate + 2-oxoglutarate = 3-(imidazol-4-yl)-2-oxopropyl phosphate + L-glutamate. The protein operates within amino-acid biosynthesis; L-histidine biosynthesis; L-histidine from 5-phospho-alpha-D-ribose 1-diphosphate: step 7/9. The polypeptide is Histidinol-phosphate aminotransferase (Frankia casuarinae (strain DSM 45818 / CECT 9043 / HFP020203 / CcI3)).